The primary structure comprises 778 residues: High affinity nerve growth factor receptor (778 aa).

A signal peptide spans 1–14; that stretch reads WGCLRLPLPLCHAL. Over 15–400 the chain is Extracellular; that stretch reads AAHCRCPASH…VETADEHTFG (386 aa). Residues C18 and C20 are joined by a disulfide bond. LRR repeat units lie at residues 71–92 and 95–116; these read DLRH…AFQD and RLSH…TFQH. 11 N-linked (GlcNAc...) asparagine glycosylation sites follow: N100, N130, N143, N151, N194, N234, N262, N300, N320, N340, and N384. An LRRCT domain is found at 127 to 175; that stretch reads NPFNCSCGIRWLQLWQNGSRAELGNQSLLCWEGSMLVALDSHPLHDCEP. A disulfide bond links C133 and C173. 2 consecutive Ig-like C2-type domains span residues 175 to 262 and 281 to 347; these read PPTA…VMLN and WCIP…VVQN. A disulfide bond links C282 and C327. The helical transmembrane segment at 401–421 threads the bilayer; sequence VSVAVALAVFASLFLSVMLIA. Over 422–778 the chain is Cytoplasmic; sequence LNKCGHRSKF…TPPIYLDILG (357 aa). The residue at position 479 (Y479) is a Phosphotyrosine; by autocatalysis. The 271-residue stretch at 493 to 763 folds into the Protein kinase domain; that stretch reads IVLKWELGEG…RSIQDIHSRL (271 aa). Residues 499-507 and K527 each bind ATP; that span reads LGEGAFGKV. The active-site Proton acceptor is D633. 4 positions are modified to phosphotyrosine; by autocatalysis: Y659, Y663, Y664, and Y773.

This sequence belongs to the protein kinase superfamily. Tyr protein kinase family. Insulin receptor subfamily. As to quaternary structure, exists in a dynamic equilibrium between monomeric (low affinity) and dimeric (high affinity) structures. Homodimerization is induced by NGF dimer binding. Interacts with PTPRS. Post-translationally, ligand-mediated auto-phosphorylation. In terms of processing, ubiquitinated. Undergoes polyubiquitination upon activation; regulated by NGFR. Ubiquitination regulates the internalization of the receptor.

The protein localises to the cell membrane. It is found in the early endosome membrane. The protein resides in the late endosome membrane. It localises to the recycling endosome membrane. The enzyme catalyses L-tyrosyl-[protein] + ATP = O-phospho-L-tyrosyl-[protein] + ADP + H(+). Its activity is regulated as follows. The pro-survival signaling effect of NTRK1 in neurons requires its endocytosis into signaling early endosomes and its retrograde axonal transport. In terms of biological role, receptor tyrosine kinase involved in the development and the maturation of the central and peripheral nervous systems through regulation of proliferation, differentiation and survival of sympathetic and nervous neurons. High affinity receptor for NGF which is its primary ligand, it can also bind and be activated by NTF3/neurotrophin-3. Upon dimeric NGF ligand-binding, undergoes homodimerization, autophosphorylation and activation. Recruits, phosphorylates and/or activates several downstream effectors that regulate distinct overlapping signaling cascades driving cell survival and differentiation. In absence of ligand and activation, may promote cell death, making the survival of neurons dependent on trophic factors. The polypeptide is High affinity nerve growth factor receptor (NTRK1) (Gallus gallus (Chicken)).